We begin with the raw amino-acid sequence, 318 residues long: Acetyl-coenzyme A carboxylase carboxyl transferase subunit alpha (318 aa).

The CoA carboxyltransferase C-terminal domain maps to 34–295 (DIEDQISQLR…KQAIKKDLSE (262 aa)).

It belongs to the AccA family. Acetyl-CoA carboxylase is a heterohexamer composed of biotin carboxyl carrier protein (AccB), biotin carboxylase (AccC) and two subunits each of ACCase subunit alpha (AccA) and ACCase subunit beta (AccD).

The protein resides in the cytoplasm. The catalysed reaction is N(6)-carboxybiotinyl-L-lysyl-[protein] + acetyl-CoA = N(6)-biotinyl-L-lysyl-[protein] + malonyl-CoA. It participates in lipid metabolism; malonyl-CoA biosynthesis; malonyl-CoA from acetyl-CoA: step 1/1. Component of the acetyl coenzyme A carboxylase (ACC) complex. First, biotin carboxylase catalyzes the carboxylation of biotin on its carrier protein (BCCP) and then the CO(2) group is transferred by the carboxyltransferase to acetyl-CoA to form malonyl-CoA. This chain is Acetyl-coenzyme A carboxylase carboxyl transferase subunit alpha, found in Colwellia psychrerythraea (strain 34H / ATCC BAA-681) (Vibrio psychroerythus).